The chain runs to 688 residues: Glycine--tRNA ligase beta subunit (688 aa).

The protein belongs to the class-II aminoacyl-tRNA synthetase family. Tetramer of two alpha and two beta subunits.

The protein localises to the cytoplasm. The enzyme catalyses tRNA(Gly) + glycine + ATP = glycyl-tRNA(Gly) + AMP + diphosphate. The chain is Glycine--tRNA ligase beta subunit from Vibrio parahaemolyticus serotype O3:K6 (strain RIMD 2210633).